Reading from the N-terminus, the 355-residue chain is GPN-loop GTPase 1 (355 aa).

The segment at methionine 1–lysine 30 is disordered. Positions proline 9–proline 21 are enriched in low complexity. Glycine 40 to threonine 45 is a binding site for GTP. The Gly-Pro-Asn (GPN)-loop; involved in dimer interface motif lies at glycine 97–asparagine 99. Asparagine 200–aspartate 203 is a binding site for GTP. A coiled-coil region spans residues glutamate 286–lysine 311.

This sequence belongs to the GPN-loop GTPase family. As to quaternary structure, heterodimer with GPN3. Binds to RNA polymerase II (RNAPII).

The protein localises to the cytoplasm. Its subcellular location is the nucleus. Small GTPase required for proper nuclear import of RNA polymerase II (RNAPII). May act at an RNAP assembly step prior to nuclear import. The protein is GPN-loop GTPase 1 of Caenorhabditis elegans.